Here is a 487-residue protein sequence, read N- to C-terminus: Protein nucleotidyltransferase YdiU (487 aa).

ATP is bound by residues Gly-90, Gly-92, Arg-93, Lys-113, Asp-125, Gly-126, Arg-176, and Arg-183. Asp-252 (proton acceptor) is an active-site residue. Mg(2+) contacts are provided by Asn-253 and Asp-262. Residue Asp-262 participates in ATP binding.

Belongs to the SELO family. Mg(2+) is required as a cofactor. Mn(2+) serves as cofactor.

It catalyses the reaction L-seryl-[protein] + ATP = 3-O-(5'-adenylyl)-L-seryl-[protein] + diphosphate. It carries out the reaction L-threonyl-[protein] + ATP = 3-O-(5'-adenylyl)-L-threonyl-[protein] + diphosphate. The enzyme catalyses L-tyrosyl-[protein] + ATP = O-(5'-adenylyl)-L-tyrosyl-[protein] + diphosphate. The catalysed reaction is L-histidyl-[protein] + UTP = N(tele)-(5'-uridylyl)-L-histidyl-[protein] + diphosphate. It catalyses the reaction L-seryl-[protein] + UTP = O-(5'-uridylyl)-L-seryl-[protein] + diphosphate. It carries out the reaction L-tyrosyl-[protein] + UTP = O-(5'-uridylyl)-L-tyrosyl-[protein] + diphosphate. Its function is as follows. Nucleotidyltransferase involved in the post-translational modification of proteins. It can catalyze the addition of adenosine monophosphate (AMP) or uridine monophosphate (UMP) to a protein, resulting in modifications known as AMPylation and UMPylation. The sequence is that of Protein nucleotidyltransferase YdiU from Pseudomonas fluorescens (strain Pf0-1).